The following is a 209-amino-acid chain: Ribosomal RNA small subunit methyltransferase G (209 aa).

Residues glycine 77, methionine 82, 128–129 (VE), and arginine 143 each bind S-adenosyl-L-methionine.

It belongs to the methyltransferase superfamily. RNA methyltransferase RsmG family.

The protein resides in the cytoplasm. The catalysed reaction is guanosine(527) in 16S rRNA + S-adenosyl-L-methionine = N(7)-methylguanosine(527) in 16S rRNA + S-adenosyl-L-homocysteine. In terms of biological role, specifically methylates the N7 position of guanine in position 527 of 16S rRNA. This chain is Ribosomal RNA small subunit methyltransferase G, found in Chromobacterium violaceum (strain ATCC 12472 / DSM 30191 / JCM 1249 / CCUG 213 / NBRC 12614 / NCIMB 9131 / NCTC 9757 / MK).